The sequence spans 314 residues: Short-chain dehydrogenase/reductase sthC (314 aa).

A compositionally biased stretch (polar residues) spans Met-1–Val-10. The interval Met-1 to Met-27 is disordered. Val-56, Lys-80, Asp-105, Asn-132, and Arg-167 together coordinate NADP(+). The active-site Proton donor is the Ser-191. Residues Tyr-222 and Lys-226 each contribute to the NADP(+) site. Tyr-222 serves as the catalytic Proton acceptor. Lys-226 acts as the Lowers pKa of active site Tyr in catalysis.

This sequence belongs to the short-chain dehydrogenases/reductases (SDR) family.

It carries out the reaction dehydroprobetaenone I + AH2 = probetaenone I + A. The catalysed reaction is betaenone C + AH2 = betaenone B + A. Its pathway is mycotoxin biosynthesis. Its function is as follows. Short-chain dehydrogenase/reductase; part of the gene cluster that mediates the biosynthesis of the phytotoxin stemphyloxin II. The first step of the pathway is the synthesis of dehydroprobetaenone I by the polyketide synthase sthA and the enoyl reductase sthE via condensation of one acetyl-CoA starter unit with 7 malonyl-CoA units and 5 methylations. The C-terminal reductase (R) domain of sthA catalyzes the reductive release of the polyketide chain. Because sthA lacks a designated enoylreductase (ER) domain, the required activity is provided the enoyl reductase sthE. The short-chain dehydrogenase/reductase sthC then catalyzes reduction of dehydroprobetaenone I to probetaenone I. The cytochrome P450 monooxygenase sthF catalyzes successive epoxidation, oxidation (resulting from epoxide opening) and hydroxylation to install a tertiary alcohol in the decaline ring to yield betaenone C from dehydroprobetaenone I and betaenone B from probetaenone I. The FAD-linked oxidoreductase sthB is responsible for the conversion of betaenone C to betaenone A via an intramolecular aldol reaction between C-1 and C-17 to form the bridged tricyclic system in betaenone A. Finally, the cytochrome P450 monooxygenase sthD catalyzes the hydroxylation of C-15 to afford the final metabolite stemphyloxin II. In Phaeosphaeria nodorum (strain SN15 / ATCC MYA-4574 / FGSC 10173) (Glume blotch fungus), this protein is Short-chain dehydrogenase/reductase sthC.